Consider the following 334-residue polypeptide: Aspartate carbamoyltransferase catalytic subunit (334 aa).

Positions 71 and 72 each coordinate carbamoyl phosphate. K99 provides a ligand contact to L-aspartate. 3 residues coordinate carbamoyl phosphate: R121, H151, and Q154. R184 and R239 together coordinate L-aspartate. Residues G280 and P281 each coordinate carbamoyl phosphate.

Belongs to the aspartate/ornithine carbamoyltransferase superfamily. ATCase family. In terms of assembly, heterododecamer (2C3:3R2) of six catalytic PyrB chains organized as two trimers (C3), and six regulatory PyrI chains organized as three dimers (R2).

The enzyme catalyses carbamoyl phosphate + L-aspartate = N-carbamoyl-L-aspartate + phosphate + H(+). Its pathway is pyrimidine metabolism; UMP biosynthesis via de novo pathway; (S)-dihydroorotate from bicarbonate: step 2/3. Functionally, catalyzes the condensation of carbamoyl phosphate and aspartate to form carbamoyl aspartate and inorganic phosphate, the committed step in the de novo pyrimidine nucleotide biosynthesis pathway. The polypeptide is Aspartate carbamoyltransferase catalytic subunit (Pseudomonas fluorescens biotype A).